The chain runs to 419 residues: Coiled-coil domain-containing protein 85C (419 aa).

Ala2 carries the post-translational modification N-acetylalanine. Coiled coils occupy residues 22–88 (ELLR…RELC) and 118–159 (HEVA…AALA). 2 disordered regions span residues 162–268 (GAAS…DPSS) and 307–348 (HSES…AGQK). Over residues 164–175 (ASGGGGGGGGAG) the composition is skewed to gly residues. Positions 176–189 (SRSSIDSQASLSGP) are enriched in low complexity. Ser178 is subject to Phosphoserine. Residues 224-233 (PPPLLPPGPH) show a composition bias toward pro residues. Residue Ser246 is modified to Phosphoserine. Residues 307 to 325 (HSESQLASLPPSYQDSLQN) show a composition bias toward polar residues. Over residues 329–338 (CPAPELPSPP) the composition is skewed to pro residues.

It belongs to the CCDC85 family. As to quaternary structure, may interact with ARVCF, CTNND1, CTNND2 and PKP4.

The protein resides in the cell junction. The protein localises to the tight junction. It is found in the adherens junction. Functionally, may play a role in cell-cell adhesion and epithelium development through its interaction with proteins of the beta-catenin family. May play an important role in cortical development, especially in the maintenance of radial glia. The protein is Coiled-coil domain-containing protein 85C (CCDC85C) of Homo sapiens (Human).